The primary structure comprises 145 residues: Large ribosomal subunit protein uL15 (145 aa).

Residues 1 to 11 (MELHSLKSTPG) show a composition bias toward polar residues. The tract at residues 1–48 (MELHSLKSTPGSRKEKHRKGRGHAAGKGKQAGKGQSGQRKRSKVRLGF) is disordered. The segment covering 14–26 (KEKHRKGRGHAAG) has biased composition (basic residues).

The protein belongs to the universal ribosomal protein uL15 family. Part of the 50S ribosomal subunit.

Functionally, binds to the 23S rRNA. The sequence is that of Large ribosomal subunit protein uL15 from Mycoplasmopsis pulmonis (strain UAB CTIP) (Mycoplasma pulmonis).